The chain runs to 321 residues: uncharacterized protein (321 aa).

The tract at residues 280-306 (NSDHINNENNTNSNNDDNSNNSNNNNE) is disordered. The span at 286–306 (NENNTNSNNDDNSNNSNNNNE) shows a compositional bias: low complexity.

This is an uncharacterized protein from Dictyostelium discoideum (Social amoeba).